The chain runs to 658 residues: UvrABC system protein B (658 aa).

The Helicase ATP-binding domain maps to 26-413; the sequence is EGINSGKKKQ…SPEVIEQIIR (388 aa). 39-46 serves as a coordination point for ATP; that stretch reads GATGTGKT. The Beta-hairpin motif lies at 92-115; sequence YYDYYQPEAYVPQTDTFIEKDAQI. In terms of domain architecture, Helicase C-terminal spans 430 to 596; that stretch reads QIDDLLGEIQ…TIQKGVRDVI (167 aa). A UVR domain is found at 622-657; the sequence is EKTIAKMEAEMKEAAKALDFERAAELRDLLLELKAE.

This sequence belongs to the UvrB family. In terms of assembly, forms a heterotetramer with UvrA during the search for lesions. Interacts with UvrC in an incision complex.

The protein localises to the cytoplasm. Its function is as follows. The UvrABC repair system catalyzes the recognition and processing of DNA lesions. A damage recognition complex composed of 2 UvrA and 2 UvrB subunits scans DNA for abnormalities. Upon binding of the UvrA(2)B(2) complex to a putative damaged site, the DNA wraps around one UvrB monomer. DNA wrap is dependent on ATP binding by UvrB and probably causes local melting of the DNA helix, facilitating insertion of UvrB beta-hairpin between the DNA strands. Then UvrB probes one DNA strand for the presence of a lesion. If a lesion is found the UvrA subunits dissociate and the UvrB-DNA preincision complex is formed. This complex is subsequently bound by UvrC and the second UvrB is released. If no lesion is found, the DNA wraps around the other UvrB subunit that will check the other stand for damage. This chain is UvrABC system protein B, found in Bacillus cereus (strain ATCC 14579 / DSM 31 / CCUG 7414 / JCM 2152 / NBRC 15305 / NCIMB 9373 / NCTC 2599 / NRRL B-3711).